A 230-amino-acid chain; its full sequence is MPLFQLDEHDVTFPAPHLALKEPSGLLAIGGDISPARLKEAYQTGIFPWYTPHETPLWWSPDPRAVLPAGTLHIGRTLRKFLRQAPYTITLNQAFSDVIEACSVRDEGTWIGPDIKTGYRALHQQGEAHSVEVWEGDELIGGLYGVNVGAVFCGESMFSRRNNASKCAFVAFYNHFLRYGGQLFDCQVLNSHTAALGAIEIARDRYLEALSRWKKVIIDKKCWYQQSLEL.

It belongs to the L/F-transferase family.

It is found in the cytoplasm. It catalyses the reaction N-terminal L-lysyl-[protein] + L-leucyl-tRNA(Leu) = N-terminal L-leucyl-L-lysyl-[protein] + tRNA(Leu) + H(+). It carries out the reaction N-terminal L-arginyl-[protein] + L-leucyl-tRNA(Leu) = N-terminal L-leucyl-L-arginyl-[protein] + tRNA(Leu) + H(+). The catalysed reaction is L-phenylalanyl-tRNA(Phe) + an N-terminal L-alpha-aminoacyl-[protein] = an N-terminal L-phenylalanyl-L-alpha-aminoacyl-[protein] + tRNA(Phe). In terms of biological role, functions in the N-end rule pathway of protein degradation where it conjugates Leu, Phe and, less efficiently, Met from aminoacyl-tRNAs to the N-termini of proteins containing an N-terminal arginine or lysine. The polypeptide is Leucyl/phenylalanyl-tRNA--protein transferase (Proteus mirabilis (strain HI4320)).